The following is a 338-amino-acid chain: Nuclear hormone receptor family member nhr-52 (338 aa).

The segment at residues 1–75 is a DNA-binding region (nuclear receptor); it reads MKCLVCCSYA…IGMRFSEPKQ (75 aa). NR C4-type zinc fingers lie at residues 3–23 and 39–63; these read CLVCCSYASSRNFGALSCSAC and CKYDKKCFESFTILPKCQFCRFKKC. The NR LBD domain maps to 98-337; sequence KDGVHYSNFL…KKLVNDIIIR (240 aa).

Belongs to the nuclear hormone receptor family.

The protein localises to the nucleus. In terms of biological role, orphan nuclear receptor. This Caenorhabditis elegans protein is Nuclear hormone receptor family member nhr-52 (nhr-52).